We begin with the raw amino-acid sequence, 351 residues long: Hydroxymethylglutaryl-CoA synthase (351 aa).

Glu-80 (proton donor/acceptor) is an active-site residue. Cys-112 serves as the catalytic Acyl-thioester intermediate. (3S)-3-hydroxy-3-methylglutaryl-CoA is bound by residues Cys-112 and Ser-153. CoA is bound at residue Arg-199. Positions 201 and 234 each coordinate (3S)-3-hydroxy-3-methylglutaryl-CoA. His-234 (proton donor/acceptor) is an active-site residue. Lys-239 provides a ligand contact to CoA. The (3S)-3-hydroxy-3-methylglutaryl-CoA site is built by Arg-243, Asn-266, and Ser-296.

Belongs to the thiolase-like superfamily. Archaeal HMG-CoA synthase family. As to quaternary structure, interacts with acetoacetyl-CoA thiolase that catalyzes the precedent step in the pathway and with a DUF35 protein. The acetoacetyl-CoA thiolase/HMG-CoA synthase complex channels the intermediate via a fused CoA-binding site, which allows for efficient coupling of the endergonic thiolase reaction with the exergonic HMGCS reaction.

The enzyme catalyses acetoacetyl-CoA + acetyl-CoA + H2O = (3S)-3-hydroxy-3-methylglutaryl-CoA + CoA + H(+). It functions in the pathway metabolic intermediate biosynthesis; (R)-mevalonate biosynthesis; (R)-mevalonate from acetyl-CoA: step 2/3. In terms of biological role, catalyzes the condensation of acetyl-CoA with acetoacetyl-CoA to form 3-hydroxy-3-methylglutaryl-CoA (HMG-CoA). Functions in the mevalonate (MVA) pathway leading to isopentenyl diphosphate (IPP), a key precursor for the biosynthesis of isoprenoid compounds that are building blocks of archaeal membrane lipids. The polypeptide is Hydroxymethylglutaryl-CoA synthase (Thermoplasma volcanium (strain ATCC 51530 / DSM 4299 / JCM 9571 / NBRC 15438 / GSS1)).